The sequence spans 404 residues: Protein L-Myc-1b (404 aa).

Disordered stretches follow at residues 175 to 195 and 238 to 331; these read KKQV…EEID and QQHN…FLER. The span at 287–315 shows a compositional bias: polar residues; that stretch reads VPAQSPTVSASPTHTSYHLKSQPSSPQSS. In terms of domain architecture, bHLH spans 321-373; the sequence is DKRKTHNFLERKRRNDLRSRFLALRDEIPGLVDCPKTPKVVILTKATEYLRTL. The leucine-zipper stretch occupies residues 373-401; the sequence is LHVSDRQKAQEKKQLKSKQQQLLRRLAEL.

In terms of assembly, efficient DNA binding requires dimerization with another bHLH protein. Binds DNA as a heterodimer with max.

The protein localises to the nucleus. This Danio rerio (Zebrafish) protein is Protein L-Myc-1b.